The sequence spans 453 residues: Iron-sulfur cluster assembly SufBD family protein slr0076 (453 aa).

This sequence belongs to the iron-sulfur cluster assembly SufBD family.

In Synechocystis sp. (strain ATCC 27184 / PCC 6803 / Kazusa), this protein is Iron-sulfur cluster assembly SufBD family protein slr0076.